A 182-amino-acid polypeptide reads, in one-letter code: Ribosome-recycling factor (182 aa).

This sequence belongs to the RRF family.

It is found in the cytoplasm. Responsible for the release of ribosomes from messenger RNA at the termination of protein biosynthesis. May increase the efficiency of translation by recycling ribosomes from one round of translation to another. The chain is Ribosome-recycling factor from Prochlorococcus marinus (strain SARG / CCMP1375 / SS120).